A 331-amino-acid polypeptide reads, in one-letter code: Anthranilate phosphoribosyltransferase (331 aa).

5-phospho-alpha-D-ribose 1-diphosphate-binding positions include Gly79, 82 to 83, Ser87, 89 to 92, 107 to 115, and Ser119; these read GD, NIST, and KHCNTSISS. Residue Gly79 participates in anthranilate binding. Position 91 (Ser91) interacts with Mg(2+). Asn110 contacts anthranilate. Position 165 (Arg165) interacts with anthranilate. Residues Asp223 and Glu224 each contribute to the Mg(2+) site.

This sequence belongs to the anthranilate phosphoribosyltransferase family. Homodimer. It depends on Mg(2+) as a cofactor.

The catalysed reaction is N-(5-phospho-beta-D-ribosyl)anthranilate + diphosphate = 5-phospho-alpha-D-ribose 1-diphosphate + anthranilate. The protein operates within amino-acid biosynthesis; L-tryptophan biosynthesis; L-tryptophan from chorismate: step 2/5. Functionally, catalyzes the transfer of the phosphoribosyl group of 5-phosphorylribose-1-pyrophosphate (PRPP) to anthranilate to yield N-(5'-phosphoribosyl)-anthranilate (PRA). The polypeptide is Anthranilate phosphoribosyltransferase (Buchnera aphidicola subsp. Schlechtendalia chinensis).